The chain runs to 314 residues: DNA-directed RNA polymerase subunit alpha (314 aa).

The segment at M1–T228 is alpha N-terminal domain (alpha-NTD). The interval K245 to D314 is alpha C-terminal domain (alpha-CTD).

Belongs to the RNA polymerase alpha chain family. In terms of assembly, homodimer. The RNAP catalytic core consists of 2 alpha, 1 beta, 1 beta' and 1 omega subunit. When a sigma factor is associated with the core the holoenzyme is formed, which can initiate transcription.

It catalyses the reaction RNA(n) + a ribonucleoside 5'-triphosphate = RNA(n+1) + diphosphate. Its function is as follows. DNA-dependent RNA polymerase catalyzes the transcription of DNA into RNA using the four ribonucleoside triphosphates as substrates. The chain is DNA-directed RNA polymerase subunit alpha from Staphylococcus saprophyticus subsp. saprophyticus (strain ATCC 15305 / DSM 20229 / NCIMB 8711 / NCTC 7292 / S-41).